The following is a 64-amino-acid chain: Alpha-conotoxin-like Ac1.1b (64 aa).

An N-terminal signal peptide occupies residues 1 to 21 (MGMRMMFTLFLLVVLTTTVVS). Residues 22–47 (FPSDSASDGRDDEAKDERSDMYKSKR) constitute a propeptide that is removed on maturation. Residues 23–46 (PSDSASDGRDDEAKDERSDMYKSK) form a disordered region. Residues 28–44 (SDGRDDEAKDERSDMYK) show a composition bias toward basic and acidic residues. Cystine bridges form between Cys51/Cys56 and Cys52/Cys62. Cys62 bears the Cysteine amide mark.

It belongs to the conotoxin A superfamily. In terms of tissue distribution, expressed by the venom duct.

The protein localises to the secreted. In terms of biological role, alpha-conotoxins act on postsynaptic membranes, they bind to the nicotinic acetylcholine receptors (nAChR) and thus inhibit them. The sequence is that of Alpha-conotoxin-like Ac1.1b from Conus achatinus (Little frog cone).